Reading from the N-terminus, the 36-residue chain is Photosystem II reaction center protein Y (36 aa).

Residues 1–4 are Lumenal-facing; sequence MDTR. The helical transmembrane segment at 5 to 23 threads the bilayer; it reads LIVIAAPVLVAASWALFNI. Residues 24–36 lie on the Stromal side of the membrane; the sequence is GRLAIQQIQRLKR.

Belongs to the PsbY family. In terms of assembly, PSII is composed of 1 copy each of membrane proteins PsbA, PsbB, PsbC, PsbD, PsbE, PsbF, PsbH, PsbI, PsbJ, PsbK, PsbL, PsbM, PsbT, PsbX, PsbY, PsbZ, Psb30/Ycf12, at least 3 peripheral proteins of the oxygen-evolving complex and a large number of cofactors. It forms dimeric complexes.

The protein localises to the plastid. The protein resides in the chloroplast thylakoid membrane. Its function is as follows. Loosely associated component of the core of photosystem II (PSII), it is not always seen in crystals. PSII is a light-driven water plastoquinone oxidoreductase, using light energy to abstract electrons from H(2)O, generating a proton gradient subsequently used for ATP formation. The protein is Photosystem II reaction center protein Y of Phaeodactylum tricornutum (strain CCAP 1055/1).